A 137-amino-acid polypeptide reads, in one-letter code: uncharacterized protein (137 aa).

The N-terminal stretch at 1–34 (MAALSRALGPLRTPAPPLWIGLFLVATGSQQSLA) is a signal peptide. Residues 33–45 (LAQPLPGNTTEAT) are compositionally biased toward polar residues. 2 disordered regions span residues 33 to 54 (LAQP…ASGS) and 98 to 137 (VLSP…LGAS). An N-linked (GlcNAc...) asparagine glycan is attached at Asn-40. Basic and acidic residues predominate over residues 121–137 (KLKEPQPQDHKPGLGAS).

It localises to the secreted. This is an uncharacterized protein from Homo sapiens (Human).